We begin with the raw amino-acid sequence, 152 residues long: Large ribosomal subunit protein bL9 (152 aa).

The protein belongs to the bacterial ribosomal protein bL9 family.

Functionally, binds to the 23S rRNA. This Synechococcus sp. (strain CC9311) protein is Large ribosomal subunit protein bL9.